Consider the following 333-residue polypeptide: Transaldolase (333 aa).

Catalysis depends on Lys136, which acts as the Schiff-base intermediate with substrate.

It belongs to the transaldolase family. Type 1 subfamily. As to quaternary structure, homodimer.

It is found in the cytoplasm. The catalysed reaction is D-sedoheptulose 7-phosphate + D-glyceraldehyde 3-phosphate = D-erythrose 4-phosphate + beta-D-fructose 6-phosphate. The protein operates within carbohydrate degradation; pentose phosphate pathway; D-glyceraldehyde 3-phosphate and beta-D-fructose 6-phosphate from D-ribose 5-phosphate and D-xylulose 5-phosphate (non-oxidative stage): step 2/3. In terms of biological role, transaldolase is important for the balance of metabolites in the pentose-phosphate pathway. The polypeptide is Transaldolase (Acidobacterium capsulatum (strain ATCC 51196 / DSM 11244 / BCRC 80197 / JCM 7670 / NBRC 15755 / NCIMB 13165 / 161)).